The chain runs to 265 residues: 5'-nucleotidase SurE (265 aa).

A divalent metal cation-binding residues include aspartate 8, aspartate 9, serine 39, and asparagine 96.

Belongs to the SurE nucleotidase family. It depends on a divalent metal cation as a cofactor.

It localises to the cytoplasm. It catalyses the reaction a ribonucleoside 5'-phosphate + H2O = a ribonucleoside + phosphate. Functionally, nucleotidase that shows phosphatase activity on nucleoside 5'-monophosphates. In Dehalococcoides mccartyi (strain ATCC BAA-2100 / JCM 16839 / KCTC 5957 / BAV1), this protein is 5'-nucleotidase SurE.